We begin with the raw amino-acid sequence, 120 residues long: NAD(P)H-quinone oxidoreductase subunit 3, chloroplastic (120 aa).

3 consecutive transmembrane segments (helical) span residues 9–29 (IFWA…LISG), 64–84 (MFAL…PWAM), and 88–108 (VLGL…IVGS).

Belongs to the complex I subunit 3 family. In terms of assembly, NDH is composed of at least 16 different subunits, 5 of which are encoded in the nucleus.

It localises to the plastid. It is found in the chloroplast thylakoid membrane. It catalyses the reaction a plastoquinone + NADH + (n+1) H(+)(in) = a plastoquinol + NAD(+) + n H(+)(out). The catalysed reaction is a plastoquinone + NADPH + (n+1) H(+)(in) = a plastoquinol + NADP(+) + n H(+)(out). Functionally, NDH shuttles electrons from NAD(P)H:plastoquinone, via FMN and iron-sulfur (Fe-S) centers, to quinones in the photosynthetic chain and possibly in a chloroplast respiratory chain. The immediate electron acceptor for the enzyme in this species is believed to be plastoquinone. Couples the redox reaction to proton translocation, and thus conserves the redox energy in a proton gradient. The polypeptide is NAD(P)H-quinone oxidoreductase subunit 3, chloroplastic (Manihot esculenta (Cassava)).